The primary structure comprises 758 residues: MTIVTNLGFPRIGARRELKRALESHWRGETDATQLQHTARELRARHWRLQRDAGVDLPPSNDFSLYDHVLDTAFLFDAIPQRYRGLVDADPLAGYFAMARGRQADNIDLHALEMTKWFDTNYHYLVPELHRDQHFALRGNKPIAEFEEALALGITTRPVLLGPVSFLLLSKTVDGSNRLDLLERLLPVYTQLLRQLQESGAEWVQIDEPTLVLDLDAQTQQAFRKAYAILNQGPRPKLLLTSYFGPLGDNLELALQLPADGLHIDLVRGTEQLDAVLNTLPAGRVLSAGLVNGRNIWRTDLDNALTMARYAQGHVGADRLWLAPSCSLLHVPVDLEQEKNLDADVRNWLAFAKQKLSELRVLADALDNKPEAETALTQTRQALEARRQSPKVHRPDVAQRLAALTPDTTRRNTAYPQRSQAQQHTLNLPAYPTTTIGSFPQTLEVREARAQFKSGKLSESDYEAFLKAETERCVRTQEEIGLDVLVHGEFERNDMVEYFGEQLDGFIFTKLGWVQSYGSRCVKPPIIYGDVVRPAPMTVTWSAYAQSLTDKPMKGMLTGPVTMLQWSFVRDDQERAQTCRQIALALRDEVQDLEKAGIKVIQIDEPAIREGLPLRRGEWADYLNWAVESFRIASSNVHDTTQIHTHMCYSEFNDIIEAVAALDADVISIETSRSRMELLDAFVKFRYPNAIGPGVYDIHSPRVPQEEEMVLLLKKARAVLPPEQLWVNPDCGLKTRGWKETRAALQTMVHAAQRLRAE.

Residues 16 to 19 (RELK) and lysine 116 contribute to the 5-methyltetrahydropteroyltri-L-glutamate site. Residues 436-438 (IGS) and glutamate 489 contribute to the L-homocysteine site. Residues 436–438 (IGS) and glutamate 489 each bind L-methionine. 5-methyltetrahydropteroyltri-L-glutamate-binding positions include 520 to 521 (RC) and tryptophan 566. Aspartate 604 contributes to the L-homocysteine binding site. Aspartate 604 serves as a coordination point for L-methionine. Residue glutamate 610 coordinates 5-methyltetrahydropteroyltri-L-glutamate. Histidine 646, cysteine 648, and glutamate 670 together coordinate Zn(2+). The active-site Proton donor is histidine 699. Residue cysteine 731 coordinates Zn(2+).

Belongs to the vitamin-B12 independent methionine synthase family. Requires Zn(2+) as cofactor.

It carries out the reaction 5-methyltetrahydropteroyltri-L-glutamate + L-homocysteine = tetrahydropteroyltri-L-glutamate + L-methionine. It functions in the pathway amino-acid biosynthesis; L-methionine biosynthesis via de novo pathway; L-methionine from L-homocysteine (MetE route): step 1/1. In terms of biological role, catalyzes the transfer of a methyl group from 5-methyltetrahydrofolate to homocysteine resulting in methionine formation. This Xylella fastidiosa (strain M23) protein is 5-methyltetrahydropteroyltriglutamate--homocysteine methyltransferase.